We begin with the raw amino-acid sequence, 400 residues long: Forkhead box protein Q1 (400 aa).

Residues 1-112 are disordered; that stretch reads MKLEVFVPRA…EGARSKPYTR (112 aa). Residues 32 to 54 show a composition bias toward low complexity; that stretch reads LSAAGDDSLGSDGDCAANSPAAG. Composition is skewed to gly residues over residues 55–66 and 95–104; these read SGAGDLEGGGGE and CAGGVGGGEG. A DNA-binding region (fork-head) is located at residues 115–210; sequence KPPYSYIALI…ADGVFRRRRK (96 aa). Residues 213 to 264 form a disordered region; it reads SHRTTVSASGLRPEEAPPGPAGTPQPAPAARSSPIARSPARQEERSSPASKF. The segment covering 228 to 239 has biased composition (pro residues); the sequence is APPGPAGTPQPA. Positions 240–251 are enriched in low complexity; the sequence is PAARSSPIARSP.

In terms of tissue distribution, expressed in kidney and stomach. Expression in the outer medulla of the kidney and the transitional epithelium. Expressed in the hair follicle medulla.

The protein resides in the nucleus. Plays a role in hair follicle differentiation. The chain is Forkhead box protein Q1 (Foxq1) from Mus musculus (Mouse).